The following is a 201-amino-acid chain: Potassium-transporting ATPase KdpC subunit (201 aa).

A helical membrane pass occupies residues 7 to 29 (PALVLLTALTAITGLAYPLAMTG).

The protein belongs to the KdpC family. The system is composed of three essential subunits: KdpA, KdpB and KdpC.

Its subcellular location is the cell inner membrane. In terms of biological role, part of the high-affinity ATP-driven potassium transport (or Kdp) system, which catalyzes the hydrolysis of ATP coupled with the electrogenic transport of potassium into the cytoplasm. This subunit acts as a catalytic chaperone that increases the ATP-binding affinity of the ATP-hydrolyzing subunit KdpB by the formation of a transient KdpB/KdpC/ATP ternary complex. The chain is Potassium-transporting ATPase KdpC subunit from Methylorubrum populi (strain ATCC BAA-705 / NCIMB 13946 / BJ001) (Methylobacterium populi).